The chain runs to 326 residues: Putative HTH-type transcriptional regulatory protein MmarC5_0898 (326 aa).

The 56-residue stretch at 128-183 folds into the HTH cro/C1-type domain; it reads LRETREKLKISVGELAEISRVSRKTIYKYEQNEANPSAEVAIKIEEYLDVPLIKGI. A DNA-binding region (H-T-H motif) is located at residues 139–158; sequence VGELAEISRVSRKTIYKYEQ.

The polypeptide is Putative HTH-type transcriptional regulatory protein MmarC5_0898 (Methanococcus maripaludis (strain C5 / ATCC BAA-1333)).